The following is a 123-amino-acid chain: ATP synthase epsilon chain (123 aa).

The protein belongs to the ATPase epsilon chain family. In terms of assembly, F-type ATPases have 2 components, CF(1) - the catalytic core - and CF(0) - the membrane proton channel. CF(1) has five subunits: alpha(3), beta(3), gamma(1), delta(1), epsilon(1). CF(0) has three main subunits: a, b and c.

The protein resides in the cell inner membrane. Produces ATP from ADP in the presence of a proton gradient across the membrane. In Helicobacter acinonychis (strain Sheeba), this protein is ATP synthase epsilon chain.